The sequence spans 162 residues: uncharacterized protein (162 aa).

The HTH asnC-type domain occupies 6–78 (LDDLDRNILR…ALIVLEVGKP (73 aa)). Positions 25 to 44 (ISELSEQLKKPESTIHFRIK) form a DNA-binding region, H-T-H motif.

This is an uncharacterized protein from Pyrococcus furiosus (strain ATCC 43587 / DSM 3638 / JCM 8422 / Vc1).